The primary structure comprises 640 residues: PAN2-PAN3 deadenylation complex subunit PAN3 (640 aa).

A C3H1-type zinc finger spans residues 17 to 46 (ENKDILCRNVLIYGHCRYEDQGCTYNHDQN). 2 stretches are compositionally biased toward polar residues: residues 43-53 (HDQNKNSSQPE) and 63-87 (DSPS…SQAA). Positions 43–101 (HDQNKNSSQPEAPSKKMFNVDSPSFTPSGQSTVLPKKTTLSSQAASAAPFTPRGGGTPT) are disordered. Positions 237 to 498 (QVIPNSGLPQ…TIEHFMTGIA (262 aa)) are pseudokinase domain. Residues asparagine 263, arginine 288, 338–345 (DFHPLSKT), and 397–398 (SK) each bind ATP. Residues 499–537 (SQMTTFFDLALQDNDEKLFHLAREVENGRIARSLMKLLT) are a coiled coil. Positions 538–640 (ILERGDYDGV…SKTGAPGANT (103 aa)) are knob domain.

Belongs to the protein kinase superfamily. PAN3 family. Homodimer. Forms a heterotrimer with a catalytic subunit PAN2 to form the poly(A)-nuclease (PAN) deadenylation complex. Interacts (via PAM-2 motif) with poly(A)-binding protein PAB1 (via PABC domain), conferring substrate specificity of the enzyme complex.

The protein localises to the cytoplasm. Regulatory subunit of the poly(A)-nuclease (PAN) deadenylation complex, one of two cytoplasmic mRNA deadenylases involved in mRNA turnover. PAN specifically shortens poly(A) tails of RNA and the activity is stimulated by poly(A)-binding protein PAB1. PAN deadenylation is followed by rapid degradation of the shortened mRNA tails by the CCR4-NOT complex. Deadenylated mRNAs are then degraded by two alternative mechanisms, namely exosome-mediated 3'-5' exonucleolytic degradation, or deadenylation-dependent mRNA decaping and subsequent 5'-3' exonucleolytic degradation by XRN1. May also be involved in post-transcriptional maturation of mRNA poly(A) tails. PAN3 acts as a positive regulator for PAN activity, recruiting the catalytic subunit PAN2 to mRNA via its interaction with RNA and with PAB1. This Chaetomium thermophilum (strain DSM 1495 / CBS 144.50 / IMI 039719) (Thermochaetoides thermophila) protein is PAN2-PAN3 deadenylation complex subunit PAN3.